Here is a 339-residue protein sequence, read N- to C-terminus: 4-hydroxy-2-oxovalerate aldolase (339 aa).

Residues 7–257 enclose the Pyruvate carboxyltransferase domain; sequence IRIMDTTLRD…QVGVDLYKIM (251 aa). Residue 15-16 coordinates substrate; that stretch reads RD. Asp16 is a Mn(2+) binding site. His19 serves as the catalytic Proton acceptor. Substrate is bound by residues Ser169 and His196. 2 residues coordinate Mn(2+): His196 and His198. Position 286 (Tyr286) interacts with substrate.

It belongs to the 4-hydroxy-2-oxovalerate aldolase family.

The enzyme catalyses (S)-4-hydroxy-2-oxopentanoate = acetaldehyde + pyruvate. The polypeptide is 4-hydroxy-2-oxovalerate aldolase (Pelotomaculum thermopropionicum (strain DSM 13744 / JCM 10971 / SI)).